The primary structure comprises 94 residues: MNLANLQLFAHKKGGGSTSNGRDSQAKRLGAKAADGQTVSGGSILYRQRGTHIYPGVNVGRGGDDTLFAKVEGVVRFERKGRDKKQVSVYPVAK.

Residues 1–9 constitute a propeptide that is removed on maturation; the sequence is MNLANLQLF. The tract at residues 11 to 34 is disordered; that stretch reads HKKGGGSTSNGRDSQAKRLGAKAA.

The protein belongs to the bacterial ribosomal protein bL27 family. In terms of processing, the N-terminus is cleaved by ribosomal processing cysteine protease Prp.

The sequence is that of Large ribosomal subunit protein bL27 from Streptococcus pyogenes serotype M3 (strain ATCC BAA-595 / MGAS315).